Consider the following 716-residue polypeptide: Tensin-4 (716 aa).

The N-terminal stretch at 1–17 is a signal peptide; that stretch reads MSQVMSSPLLAGGPAVG. 4 disordered regions span residues 119 to 274, 301 to 322, 334 to 366, and 379 to 436; these read LPPG…VSML, QSSS…NLGP, VPSN…PSIT, and GFPE…RDMQ. Positions 138–150 are enriched in basic and acidic residues; it reads KKKEEPEALDIKY. Over residues 197 to 206 the composition is skewed to polar residues; the sequence is SSESLIFSGS. Residues 214–228 show a composition bias toward pro residues; it reads PAPPSAVPSSHPPTS. Serine 248 is modified (phosphoserine). The segment covering 265–274 has biased composition (polar residues); sequence PQLSSRVSML. Positions 402-419 are enriched in polar residues; sequence ATSSSMPCPATRSHSQTL. Residues 449-556 form the SH2 domain; that stretch reads WFKPSISREQ…ALPCKLVIPQ (108 aa). In terms of domain architecture, PTB spans 583–704; that stretch reads CHALYLSSVS…TLQPASQVIR (122 aa).

Belongs to the PTEN phosphatase protein family. As to quaternary structure, interacts (via SH2 domain) with Rho GTPase-activating protein DLC1 (via C-terminus); the interaction is independent of DLC1 tyrosine phosphorylation. Interacts with integrin ITGB1; the interaction displaces tensin TNS3 from the ITGB1 cytoplasmic tail and promotes ITGB1 stability. Interacts (via SH2 domain) with E3 ubiquitin-protein ligase CBL (phosphorylated on 'Tyr-782'); the interaction is enhanced in the presence of EGF and reduces interaction of CBL with EGFR. Interacts (via SH2 domain) with receptor tyrosine kinase MET (when phosphorylated); the interaction increases MET protein stability.

The protein localises to the cell junction. The protein resides in the focal adhesion. It localises to the cytoplasm. It is found in the cytoskeleton. In terms of biological role, promotes EGF-induced cell migration by displacing tensin TNS3 from the cytoplasmic tail of integrin ITGB1 which results in dissociation of TNS3 from focal adhesions, disassembly of actin stress fibers and initiation of cell migration. Suppresses ligand-induced degradation of EGFR by reducing EGFR ubiquitination in the presence of EGF. Increases MET protein stability by inhibiting MET endocytosis and subsequent lysosomal degradation which leads to increased cell survival, proliferation and migration. The protein is Tensin-4 (TNS4) of Bos taurus (Bovine).